The primary structure comprises 626 residues: SHC-transforming protein 4 (626 aa).

Positions 1–185 (MRERSQDSQA…KQDGPPLQHL (185 aa)) are CH2. Disordered regions lie at residues 38–76 (ITSLDEGSPGGSVGNKGSSPPPYPALAPHLPTEDATVSS) and 119–182 (LQEN…GPPL). Residues 120 to 139 (QENQDQTPSRPASPESNLNR) are compositionally biased toward polar residues. Residues 186-369 (LGNGLNYCVR…LVDGAPEDRD (184 aa)) form the PID domain. The tract at residues 370 to 521 (HDYYNSIPGK…HIRQQLWDEE (152 aa)) is CH1. Tyrosine 422 is subject to Phosphotyrosine. The region spanning 522–613 (CFHGKLSRGA…GSEVRLKQPI (92 aa)) is the SH2 domain.

Interacts (via PID domain) with phosphorylated MUSK (via NPXY motif); undergoes tyrosine phosphorylation downstream of activated MUSK. Interacts with GRB2; the interaction is dependent of Tyr-422 phosphorylation and increased by EGF. In terms of processing, phosphorylated; the phosphorylation is enhanced by EGF. Phosphorylation at Tyr-422 is required for the interaction with GRB2. In terms of tissue distribution, expressed in both brain and skeletal muscle; widely expressed in brain namely olfactory bulb, cortex, hippocampus, striatum, thalamus, and brain stem (at protein level). Only expressed in melanomas. Weakly expressed in normal melanocytes and benign nevi. Highly expressed at the transition from radial growth phase to vertical growth phase and metastatic melanomas, when tumor cells acquire migratory competence and invasive potential.

Its subcellular location is the postsynaptic cell membrane. Its function is as follows. Activates both Ras-dependent and Ras-independent migratory pathways in melanomas. Contributes to the early phases of agrin-induced tyrosine phosphorylation of CHRNB1. In Mus musculus (Mouse), this protein is SHC-transforming protein 4 (Shc4).